A 208-amino-acid chain; its full sequence is Endo-1,4-beta-xylanase B (208 aa).

The first 16 residues, 1-16 (MKVTAAFAGLLATTLA), serve as a signal peptide directing secretion. Residues 17-207 (APATELVTRS…GTGTASVTVS (191 aa)) enclose the GH11 domain. The active-site Nucleophile is E101. E194 serves as the catalytic Proton donor.

Belongs to the glycosyl hydrolase 11 (cellulase G) family.

Its subcellular location is the secreted. The catalysed reaction is Endohydrolysis of (1-&gt;4)-beta-D-xylosidic linkages in xylans.. Its pathway is glycan degradation; xylan degradation. With respect to regulation, N-bromosuccinimide completely inhibits the catalytic activity. Endo-1,4-beta-xylanase involved in the hydrolysis of xylan, a major structural heterogeneous polysaccharide found in plant biomass representing the second most abundant polysaccharide in the biosphere, after cellulose. The protein is Endo-1,4-beta-xylanase B (xynB) of Talaromyces purpureogenus (Soft rot fungus).